Reading from the N-terminus, the 61-residue chain is Large ribosomal subunit protein uL30 (61 aa).

This sequence belongs to the universal ribosomal protein uL30 family. In terms of assembly, part of the 50S ribosomal subunit.

The protein is Large ribosomal subunit protein uL30 of Chromobacterium violaceum (strain ATCC 12472 / DSM 30191 / JCM 1249 / CCUG 213 / NBRC 12614 / NCIMB 9131 / NCTC 9757 / MK).